We begin with the raw amino-acid sequence, 504 residues long: ATP synthase subunit alpha, chloroplastic (504 aa).

ATP is bound at residue Gly-170 to Thr-177.

The protein belongs to the ATPase alpha/beta chains family. F-type ATPases have 2 components, CF(1) - the catalytic core - and CF(0) - the membrane proton channel. CF(1) has five subunits: alpha(3), beta(3), gamma(1), delta(1), epsilon(1). CF(0) has four main subunits: a, b, b' and c.

The protein localises to the plastid. Its subcellular location is the chloroplast thylakoid membrane. The enzyme catalyses ATP + H2O + 4 H(+)(in) = ADP + phosphate + 5 H(+)(out). Functionally, produces ATP from ADP in the presence of a proton gradient across the membrane. The alpha chain is a regulatory subunit. The chain is ATP synthase subunit alpha, chloroplastic from Porphyra purpurea (Red seaweed).